We begin with the raw amino-acid sequence, 403 residues long: S-adenosylmethionine synthase (403 aa).

His17 provides a ligand contact to ATP. Asp19 provides a ligand contact to Mg(2+). Residue Glu45 coordinates K(+). L-methionine-binding residues include Glu58 and Gln104. Residues 104-114 (QSPDIAQGVDT) form a flexible loop region. Residues 179-181 (DGK), 250-251 (KF), Asp259, 265-266 (RK), Ala282, and Lys286 each bind ATP. An L-methionine-binding site is contributed by Asp259. Lys290 contacts L-methionine.

It belongs to the AdoMet synthase family. Homotetramer; dimer of dimers. Mg(2+) serves as cofactor. It depends on K(+) as a cofactor.

It localises to the cytoplasm. It catalyses the reaction L-methionine + ATP + H2O = S-adenosyl-L-methionine + phosphate + diphosphate. Its pathway is amino-acid biosynthesis; S-adenosyl-L-methionine biosynthesis; S-adenosyl-L-methionine from L-methionine: step 1/1. Functionally, catalyzes the formation of S-adenosylmethionine (AdoMet) from methionine and ATP. The overall synthetic reaction is composed of two sequential steps, AdoMet formation and the subsequent tripolyphosphate hydrolysis which occurs prior to release of AdoMet from the enzyme. The sequence is that of S-adenosylmethionine synthase from Mycobacterium tuberculosis (strain ATCC 25177 / H37Ra).